Consider the following 319-residue polypeptide: Homeobox protein Hox-B5a (319 aa).

The interval 114–224 (SLLSPGSGDT…NTVGSEGQPP (111 aa)) is disordered. Residues 128-155 (RSSSPRSEQSGSGNLSSTNLSSSTNISS) show a composition bias toward low complexity. The Antp-type hexapeptide signature appears at 226 to 231 (IFPWMR). Residues 244 to 303 (GKRARTAYTRYQTLELEKEFHFNRYLTRRRRIEIAHALCLTERQIKIWFQNRRMKWKKDN) constitute a DNA-binding region (homeobox).

The protein belongs to the Antp homeobox family.

It localises to the nucleus. Sequence-specific transcription factor which is part of a developmental regulatory system that provides cells with specific positional identities on the anterior-posterior axis. The sequence is that of Homeobox protein Hox-B5a (hoxb5a) from Takifugu rubripes (Japanese pufferfish).